The sequence spans 122 residues: Small ribosomal subunit protein uS13 (122 aa).

Residues 97–122 form a disordered region; that stretch reads PVRGQRTHTNARTRKGPAKAIAGKKK.

It belongs to the universal ribosomal protein uS13 family. In terms of assembly, part of the 30S ribosomal subunit. Forms a loose heterodimer with protein S19. Forms two bridges to the 50S subunit in the 70S ribosome.

In terms of biological role, located at the top of the head of the 30S subunit, it contacts several helices of the 16S rRNA. In the 70S ribosome it contacts the 23S rRNA (bridge B1a) and protein L5 of the 50S subunit (bridge B1b), connecting the 2 subunits; these bridges are implicated in subunit movement. Contacts the tRNAs in the A and P-sites. The chain is Small ribosomal subunit protein uS13 from Bartonella henselae (strain ATCC 49882 / DSM 28221 / CCUG 30454 / Houston 1) (Rochalimaea henselae).